Reading from the N-terminus, the 222-residue chain is V-type ATP synthase subunit D (222 aa).

Belongs to the V-ATPase D subunit family.

In terms of biological role, produces ATP from ADP in the presence of a proton gradient across the membrane. This is V-type ATP synthase subunit D from Clostridioides difficile (strain 630) (Peptoclostridium difficile).